The sequence spans 505 residues: T-cell activation GTPase-activating protein 1 (505 aa).

Disordered regions lie at residues 81–147 (DDSL…SESS), 160–212 (QQDR…DPFT), 242–293 (QGHI…QREI), 311–339 (RTSS…SQLS), and 414–441 (KPST…HRLS). Over residues 90-102 (SDVSTLQNDSAYD) the composition is skewed to polar residues. Over residues 203–212 (EGDEAEDPFT) the composition is skewed to acidic residues. Positions 250 to 262 (SRSSPGESLGSSP) are enriched in low complexity. 2 stretches are compositionally biased toward basic and acidic residues: residues 283–292 (KTDKTKPQRE) and 318–336 (EKSK…RKES).

In Mus musculus (Mouse), this protein is T-cell activation GTPase-activating protein 1 (Tagap1).